A 288-amino-acid chain; its full sequence is Undecaprenyl-diphosphatase (288 aa).

A run of 8 helical transmembrane segments spans residues 25 to 45, 53 to 73, 93 to 113, 121 to 141, 171 to 191, 196 to 216, 231 to 251, and 263 to 283; these read GITE…NEFL, FIDM…MVIY, WKLW…GLLL, LSNF…FIWI, VLSI…GIIV, SVAA…YSGL, GQAA…LFVI, and FTVF…YGAV.

Belongs to the UppP family.

Its subcellular location is the cell membrane. It carries out the reaction di-trans,octa-cis-undecaprenyl diphosphate + H2O = di-trans,octa-cis-undecaprenyl phosphate + phosphate + H(+). Catalyzes the dephosphorylation of undecaprenyl diphosphate (UPP). Confers resistance to bacitracin. The polypeptide is Undecaprenyl-diphosphatase (Streptococcus thermophilus (strain CNRZ 1066)).